Here is a 174-residue protein sequence, read N- to C-terminus: Gamma-crystallin C (174 aa).

Beta/gamma crystallin 'Greek key' domains follow at residues 2 to 40 (GKIT…RVDS) and 41 to 83 (GCWM…RLIP). The residue at position 23 (C23) is an S-methylcysteine. The interval 84-87 (HTGS) is connecting peptide. 2 consecutive Beta/gamma crystallin 'Greek key' domains span residues 88–128 (HRMR…HVLE) and 129–171 (GCWV…RRVV).

Belongs to the beta/gamma-crystallin family.

Its function is as follows. Crystallins are the dominant structural components of the vertebrate eye lens. The polypeptide is Gamma-crystallin C (Crygc) (Rattus norvegicus (Rat)).